The sequence spans 353 residues: S-adenosylmethionine:tRNA ribosyltransferase-isomerase (353 aa).

It belongs to the QueA family. As to quaternary structure, monomer.

It is found in the cytoplasm. The enzyme catalyses 7-aminomethyl-7-carbaguanosine(34) in tRNA + S-adenosyl-L-methionine = epoxyqueuosine(34) in tRNA + adenine + L-methionine + 2 H(+). Its pathway is tRNA modification; tRNA-queuosine biosynthesis. Its function is as follows. Transfers and isomerizes the ribose moiety from AdoMet to the 7-aminomethyl group of 7-deazaguanine (preQ1-tRNA) to give epoxyqueuosine (oQ-tRNA). This chain is S-adenosylmethionine:tRNA ribosyltransferase-isomerase, found in Paraburkholderia phymatum (strain DSM 17167 / CIP 108236 / LMG 21445 / STM815) (Burkholderia phymatum).